A 448-amino-acid polypeptide reads, in one-letter code: Tapasin (448 aa).

A signal peptide spans 1–20; the sequence is MKSLSLLLAVALGLATAVSA. Residues 21–414 lie on the Lumenal side of the membrane; the sequence is GPAVIECWFV…LSGPSLEDSI (394 aa). C27 and C91 are disulfide-bonded. Residue N253 is glycosylated (N-linked (GlcNAc...) asparagine). The 108-residue stretch at 292 to 399 folds into the Ig-like C1-type domain; the sequence is PKVSLMPATL…PASGRSAEVT (108 aa). C315 and C382 are joined by a disulfide. Residues 415–435 traverse the membrane as a helical segment; the sequence is GLFLSAFFLLGLFKALGWAAV. Residues 436–448 are Cytoplasmic-facing; that stretch reads YLSTCKDSKKKAE.

As to quaternary structure, heterodimer with PDIA3; disulfide-linked. Obligatory mediator for the interaction between newly assembled MHC class I molecules, calreticulin, PDIA3 and TAP. Up to 4 MHC class I/tapasin complexes bind to 1 TAP. Interacts with HLA-G-B2M complex; this interaction is required for loading of high affinity peptides. On its own or as part of MHC class I peptide loading complex, interacts with ligand-free MR1 or MR1-B2M complex, providing for stable MR1 pools ready for metabolite antigen processing.

Its subcellular location is the endoplasmic reticulum membrane. Functionally, involved in the association of MHC class I with transporter associated with antigen processing (TAP) and in the assembly of MHC class I with peptide (peptide loading). This is Tapasin (TAPBP) from Chlorocebus aethiops (Green monkey).